The primary structure comprises 272 residues: Phosphate import ATP-binding protein PstB (272 aa).

The ABC transporter domain occupies 26–267 (VAARNLNFYY…PADRRTQDYI (242 aa)). An ATP-binding site is contributed by 58–65 (GPSGCGKS).

The protein belongs to the ABC transporter superfamily. Phosphate importer (TC 3.A.1.7) family. In terms of assembly, the complex is composed of two ATP-binding proteins (PstB), two transmembrane proteins (PstC and PstA) and a solute-binding protein (PstS).

The protein localises to the cell inner membrane. The catalysed reaction is phosphate(out) + ATP + H2O = ADP + 2 phosphate(in) + H(+). Its function is as follows. Part of the ABC transporter complex PstSACB involved in phosphate import. Responsible for energy coupling to the transport system. The sequence is that of Phosphate import ATP-binding protein PstB from Nitrobacter hamburgensis (strain DSM 10229 / NCIMB 13809 / X14).